The following is a 683-amino-acid chain: MLNGWRRAFCTSIPKETNQNDVDDDGLVGLRHKSTSRFGFFSTPSTPRSDSGTGTYSLRCRTSTATAVSTTSSLPGTPKLKCKTTTTGETTPRNRSLVSLLTPSSSSISPASFTLLKSKLRFKQSSSNKCGICLQSVKSGQGTAIFTAECSHTFHFPCVTSRAAANHNRLASCPVCGSSLLPEIRNYAKPESQIKPEIKNKSLRVYNDDEALISSPISPAGFHTILESDENEDCEEFTGFSVNTPSPLTAKLLTDRNVDVKLSPESAIVASGKGYETYSVVMKVKSPPFPTARGFARRVPVDLVAVLDVSGRNSGGKLEMLKQTMRIVLSNLREMDRLSIIAFSSSSKRLSPLRRMTANGRRSARRIVDIITVPGSVSGVGIDFSGEGMSVNDALKKAVKVLDDRRQKNPFTAVFVLTDRQAHQVAQLAHSRIPIHTIWLSHAIPEDAFARTINGYLSLSVQDLGLQLGIVSGLGQGEITSVYSLSGRPAWLGTGSIRLGDMYAEEERALLVEIKSPVNNSLTGSRSHKIMTVRSRYVDPTTQELRNPEDRALLIPTPLTVRSSSNPNISRLRNLHVSTRAVAESRRLIERNHYSGAHRLLTSARALLVQHGLSSSDACIRGLDAEIADLNSVKGRHVAASESLESLTPTSAWKAAERLAKVAMVRKHMNRVSDLHGFENARF.

The segment at 130–176 adopts an RING-type; atypical zinc-finger fold; that stretch reads CGICLQSVKSGQGTAIFTAECSHTFHFPCVTSRAAANHNRLASCPVC. The region spanning 302 to 438 is the VWFA domain; it reads DLVAVLDVSG…AHSRIPIHTI (137 aa).

As to expression, expressed in root tips and leaf primordia.

It catalyses the reaction S-ubiquitinyl-[E2 ubiquitin-conjugating enzyme]-L-cysteine + [acceptor protein]-L-lysine = [E2 ubiquitin-conjugating enzyme]-L-cysteine + N(6)-ubiquitinyl-[acceptor protein]-L-lysine.. In terms of biological role, E3 ubiquitin-protein ligase involved in the regulation of root growth. Acts as a positive regulator of root gravitropism. Possesses E3 protein ligase activity in vitro. The chain is E3 ubiquitin-protein ligase WAVH1 from Arabidopsis thaliana (Mouse-ear cress).